Here is a 350-residue protein sequence, read N- to C-terminus: Leucine-rich repeat-containing protein 58 (350 aa).

LRR repeat units lie at residues 14–34 (NLTHLGLENLNLELVSENKRK), 35–56 (DVQQILLPHNRLVVLPPLVASF), 58–80 (HLHLLDISNNNMVYIGEEILGLT), 81–102 (KLKTLLAKNNRLDEFSFPKEMG), 105–125 (RLEVLNLSGNRFEEIPDQFLQ), 128–149 (TLKSLSLGGNRLKSIPAEIENL), 151–173 (SLEFLYLGGNFISSIPSELANLP), 174–195 (YLSYLVLCDNRIQSIPPQLAQV), 197–218 (SLRSLSLHNNLLTYLPREILSL), and 220–240 (HLHELSLRGNPLVVRFVRDLT).

The polypeptide is Leucine-rich repeat-containing protein 58 (lrrc58) (Xenopus laevis (African clawed frog)).